Here is a 373-residue protein sequence, read N- to C-terminus: Centrosomal protein of 41 kDa (373 aa).

Residues 89-127 are disordered; the sequence is QRLEDNDSATSEPDAEITAKTNGNGSPGEQSPSPVQFIN. Phosphoserine is present on residues serine 96 and serine 99. The segment covering 107–127 has biased composition (polar residues); it reads AKTNGNGSPGEQSPSPVQFIN. A Phosphothreonine modification is found at threonine 109. Serine 114 and serine 121 each carry phosphoserine. The region spanning 169-266 is the Rhodanese domain; it reads PDCPFLLLDV…LAQKFPEGLI (98 aa). Disordered regions lie at residues 275-300 and 315-373; these read QQAL…ENKW and EEDQ…KPWK. Arginine 343 carries the post-translational modification Omega-N-methylarginine.

It belongs to the CEP41 family. In terms of assembly, found in a complex with TTLL6.

The protein resides in the cytoplasm. It is found in the cytoskeleton. The protein localises to the microtubule organizing center. Its subcellular location is the centrosome. It localises to the cell projection. The protein resides in the cilium. It is found in the cilium basal body. Its function is as follows. Required during ciliogenesis for tubulin glutamylation in cilium. Probably acts by participating in the transport of TTLL6, a tubulin polyglutamylase, between the basal body and the cilium. The protein is Centrosomal protein of 41 kDa (CEP41) of Bos taurus (Bovine).